A 321-amino-acid chain; its full sequence is Probable protein phosphatase methylesterase 1 (321 aa).

Catalysis depends on residues Ser170, Asp195, and His307.

The protein belongs to the AB hydrolase superfamily.

It catalyses the reaction [phosphatase 2A protein]-C-terminal L-leucine methyl ester + H2O = [phosphatase 2A protein]-C-terminal L-leucine + methanol + H(+). Demethylates proteins that have been reversibly carboxymethylated. The chain is Probable protein phosphatase methylesterase 1 (ppme1) from Dictyostelium discoideum (Social amoeba).